The following is a 165-amino-acid chain: 3-hydroxyacyl-[acyl-carrier-protein] dehydratase FabZ (165 aa).

Histidine 68 is an active-site residue.

This sequence belongs to the thioester dehydratase family. FabZ subfamily.

Its subcellular location is the cytoplasm. The catalysed reaction is a (3R)-hydroxyacyl-[ACP] = a (2E)-enoyl-[ACP] + H2O. Its function is as follows. Involved in unsaturated fatty acids biosynthesis. Catalyzes the dehydration of short chain beta-hydroxyacyl-ACPs and long chain saturated and unsaturated beta-hydroxyacyl-ACPs. The chain is 3-hydroxyacyl-[acyl-carrier-protein] dehydratase FabZ from Methylobacterium sp. (strain 4-46).